The chain runs to 308 residues: UPF0282 protein M1425_2116 (308 aa).

Belongs to the UPF0282 family.

The sequence is that of UPF0282 protein M1425_2116 from Saccharolobus islandicus (strain M.14.25 / Kamchatka #1) (Sulfolobus islandicus).